The following is a 255-amino-acid chain: Small ribosomal subunit protein eS1 (255 aa).

Alanine 2 is modified (N-acetylalanine; partial).

Belongs to the eukaryotic ribosomal protein eS1 family. In terms of assembly, component of the small ribosomal subunit. Mature ribosomes consist of a small (40S) and a large (60S) subunit. The 40S subunit contains about 33 different proteins and 1 molecule of RNA (18S). The 60S subunit contains about 49 different proteins and 3 molecules of RNA (25S, 5.8S and 5S).

It is found in the cytoplasm. The chain is Small ribosomal subunit protein eS1 from Kluyveromyces lactis (strain ATCC 8585 / CBS 2359 / DSM 70799 / NBRC 1267 / NRRL Y-1140 / WM37) (Yeast).